The primary structure comprises 334 residues: Cyclin N-terminal domain-containing protein 1 (334 aa).

One can recognise a Cyclin N-terminal domain in the interval asparagine 29–asparagine 180.

In terms of assembly, interacts with PRR19; this interaction promotes crossover formation. Interacts with RFC3 and RFC4; these interactions facilitate crossover formation. Interacts with CDC34; this interaction regulates the cell-cycle progression. In terms of tissue distribution, isoform 2 is expressed in spermatocyte.

Its subcellular location is the nucleus. It localises to the cytoplasm. It is found in the chromosome. Its function is as follows. Plays a role in the different steps of crossover formation during meiotic recombination. Participates in the crossover differentiation step of crossover-specific recombination intermediates through its interaction with PRR19. In addition, stimulates crossover formation through the interactions with RFC3 and RFC4 and simultaneously regulates cell-cycle progression through interactions with CDC34 and subsequent ubiquitination of WEE1. May also participates in an active deselection process that destabilizes or removes excess pre-CO intermediates. This chain is Cyclin N-terminal domain-containing protein 1, found in Mus musculus (Mouse).